A 1009-amino-acid polypeptide reads, in one-letter code: MDFYNPYLSKKPTDTKTPKLHTTRQSICRLVPKCFRNPTEKGVVSVSSFALPTYFFKGNENKVYLENGKSMWHLRRPCKNALLEEQSITFHIYDIVETTYSEDRCNDIPFKFQTDIIPNGTVLKLLGRTLEGASVCVNVFGQRNYFYVKVPEGGNITYLIKQALNEKFSPSCAYQTEAVKKKILSRYDPEEHDVFKVTVSSSLSVYKISDSLVSNGCEVFETNVDAIRRFVIDNDFSTFGWYTCKSACPRITNRDSHTDIEFDCGYYDLEFHADRTEWPPYNIMSFDIECIGEKGFPCAKNEGDLIIQISCVFWHAGALDTTRNMLLSLGTCSAVENTEVYEFPSEIDMLHGFFSLIRDFNVEIITGYNISNFDLPYLIDRATQIYNIKLSDYSRVKTGSIFQVHTPKDTGNGFMRSVSKIKISGIIAIDMYIVCKDKLSLSNYKLDTVANHCIGAKKEDVSYKDIMPLFMSGPEGRAKIGLYCVIDSVLVMKLLKFFMIHVEISEIAKLAKIPTRRVLTDGQQIRVFSCLLAAARAENYILPVSNDVNADGFQGATVINPIPGFYNNAVLVVDFASLYPSIIQAHNLCYSTLIPHHALHNYPHLKSSDYETFMLSSGPIHFVKKHIQASLLSRLLTVWLSKRKAIRQKLAECEDLDTKTILDKQQLAIKVTCNAVYGFTGVASGLLPCISIAETVTLQGRTMLEKSKIFIEAMTPDTLQEIVPHIVKHEPDAKFRVIYGDTDSLFVECVGYSVDTVVKFGDFLAAFTSEKLFNAPIKLESEKTFQCLLLLAKKRYIGILSNDKLLMKGVDLVRKTACKFVQNTSSKILNLILKDPEVKAAAQLLSTKDPDYAFREGLPDGFLKVIDILNESHKNLRTGQVPVEELTFSTELSRPISSYKTENLPHLTVYKKIITRHEEPPQVHDRIPYVFVGKTTSCISNMAEDPTYTVQNNIPIAVDLYFDKLIHGVANIIQCLFKDSSKTVSVLYNFVSTPVLFSYELLTDHSVKA.

This sequence belongs to the DNA polymerase type-B family.

The protein resides in the host nucleus. It catalyses the reaction DNA(n) + a 2'-deoxyribonucleoside 5'-triphosphate = DNA(n+1) + diphosphate. This is DNA polymerase catalytic subunit (9) from Saimiri sciureus (Common squirrel monkey).